Here is an 818-residue protein sequence, read N- to C-terminus: Auxin response factor 12 (818 aa).

Low complexity predominate over residues 1 to 10; it reads MSSSSAASIG. The tract at residues 1 to 24 is disordered; that stretch reads MSSSSAASIGPPQPPPPPAPPEEE. Pro residues predominate over residues 11–20; it reads PPQPPPPPAP. The segment at residues 135-237 is a DNA-binding region (TF-B3); sequence FCKTLTASDT…QLLLGIRRAS (103 aa). 2 disordered regions span residues 526–565 and 629–648; these read NDQKQKIQPDQSYQVPTSAVLPSPTSLPSHLREKFGFSDP and GSVLHNSPTSKDGSVENKIG. Polar residues predominate over residues 629 to 640; it reads GSVLHNSPTSKD. The PB1 domain maps to 719–803; that stretch reads RTFVKVYKSG…WYIKILSPED (85 aa).

It belongs to the ARF family. Homodimers and heterodimers. In terms of tissue distribution, expressed in roots, culms, leaves and young panicles.

It localises to the nucleus. Auxin response factors (ARFs) are transcriptional factors that bind specifically to the DNA sequence 5'-TGTCTC-3' found in the auxin-responsive promoter elements (AuxREs). The chain is Auxin response factor 12 (ARF12) from Oryza sativa subsp. japonica (Rice).